Here is a 527-residue protein sequence, read N- to C-terminus: 4-alpha-glucanotransferase (527 aa).

Belongs to the disproportionating enzyme family.

It is found in the cytoplasm. It catalyses the reaction Transfers a segment of a (1-&gt;4)-alpha-D-glucan to a new position in an acceptor, which may be glucose or a (1-&gt;4)-alpha-D-glucan.. This Chlamydia muridarum (strain MoPn / Nigg) protein is 4-alpha-glucanotransferase (malQ).